Reading from the N-terminus, the 57-residue chain is Small ribosomal subunit protein eS27 (57 aa).

Zn(2+)-binding residues include C10, C13, C29, and C32. Residues 10–32 (CPDCENEQSLFEKAASEVSCAVC) form a C4-type zinc finger.

It belongs to the eukaryotic ribosomal protein eS27 family. Part of the 30S ribosomal subunit. Requires Zn(2+) as cofactor.

This chain is Small ribosomal subunit protein eS27, found in Haloarcula marismortui (strain ATCC 43049 / DSM 3752 / JCM 8966 / VKM B-1809) (Halobacterium marismortui).